We begin with the raw amino-acid sequence, 257 residues long: MASAATEGEKGSPVVVGLLVVGNIIILLSGLALFAETVWVTADQYRVYPLMGVSGKDDVFAGAWIAIFCGFSFFVVASFGVGAALCRRRYMILTYLLLMLIVYIFECASCITSYTHRDYMVSNPSLITKQMLTYYSADTDQGQELTRLWDRIMIEQECCGTSGPMDWVNYTSAFRAATPEVVFPWPPLCCRRTGNFIPINEDGCRVGHMDYLFTKGCFEHIGHAIDSYTWGISWFGFAILMWTLPVMLIAMYFYTTL.

The Cytoplasmic segment spans residues 1 to 13; the sequence is MASAATEGEKGSP. Residues 14-34 form a helical membrane-spanning segment; sequence VVVGLLVVGNIIILLSGLALF. Residues 35–58 lie on the Extracellular side of the membrane; it reads AETVWVTADQYRVYPLMGVSGKDD. Residues 59–85 traverse the membrane as a helical segment; that stretch reads VFAGAWIAIFCGFSFFVVASFGVGAAL. The Cytoplasmic segment spans residues 86–90; it reads CRRRY. Residues 91 to 111 form a helical membrane-spanning segment; sequence MILTYLLLMLIVYIFECASCI. Residues 112 to 229 are Extracellular-facing; that stretch reads TSYTHRDYMV…HIGHAIDSYT (118 aa). An N-linked (GlcNAc...) asparagine glycan is attached at Asn-169. Residues 230-251 form a helical membrane-spanning segment; sequence WGISWFGFAILMWTLPVMLIAM. Residues 252-257 are Cytoplasmic-facing; sequence YFYTTL.

This sequence belongs to the tetraspanin (TM4SF) family. Homodimer; disulfide-linked. Interacts with uroplakin-2 (UPK2). Binds to uropathogenic E.coli fimH.

It is found in the membrane. Component of the asymmetric unit membrane (AUM); a highly specialized biomembrane elaborated by terminally differentiated urothelial cells. May play an important role in normal bladder epithelial physiology, possibly in regulating membrane permeability of superficial umbrella cells or in stabilizing the apical membrane through AUM/cytoskeletal interactions. The polypeptide is Uroplakin-1a (Upk1a) (Mus musculus (Mouse)).